The chain runs to 277 residues: Carbonyl reductase [NADPH] 1 (277 aa).

Position 2 is an N-acetylserine (S2). S2 and S30 each carry phosphoserine. Residues 10–34, 63–64, and N90 contribute to the NADP(+) site; these read VTGANKGIGFAITRDLCRKFSGDVV and DI. Glutathione is bound by residues 95-97 and Q106; that span reads FKV. Residue S140 coordinates substrate. 193–194 contributes to the glutathione binding site; it reads AY. Y194 serves as the catalytic Proton acceptor. NADP(+)-binding positions include 194–198 and 231–233; these read YGVTK and VRT. K239 is subject to N6-1-carboxyethyl lysine. Residues 258 to 277 form a disordered region; that stretch reads PPDAEGPHGQFVQDKKVEPW.

The protein belongs to the short-chain dehydrogenases/reductases (SDR) family. Monomer.

The protein localises to the cytoplasm. The enzyme catalyses a secondary alcohol + NADP(+) = a ketone + NADPH + H(+). The catalysed reaction is prostaglandin F2alpha + NADP(+) = prostaglandin E2 + NADPH + H(+). It catalyses the reaction prostaglandin E1 + NADP(+) = 15-oxoprostaglandin E1 + NADPH + H(+). It carries out the reaction menadione + NADPH + H(+) = menadiol + NADP(+). The enzyme catalyses prostaglandin D2 + NADP(+) = 15-oxoprostaglandin D2 + NADPH + H(+). The catalysed reaction is prostaglandin E2 + NADP(+) = 15-oxoprostaglandin E2 + NADPH + H(+). It catalyses the reaction prostaglandin F2alpha + NADP(+) = 15-oxoprostaglandin F2alpha + NADPH + H(+). It carries out the reaction daunorubicin + NADPH + H(+) = 13-dihydrodaunorubicin + NADP(+). The enzyme catalyses S-nitrosoglutathione + NADPH + H(+) = S-(hydroxysulfenamide)glutathione + NADP(+). The catalysed reaction is corticosterone + NADPH + H(+) = 20beta-dihydrocorticosterone + NADP(+). It catalyses the reaction a primary alcohol + NADP(+) = an aldehyde + NADPH + H(+). It carries out the reaction cortisol + NADPH + H(+) = 20beta-dihydrocortisol + NADP(+). Functionally, NADPH-dependent reductase with broad substrate specificity. Catalyzes the reduction of a wide variety of carbonyl compounds including quinones, prostaglandins, menadione, plus various xenobiotics. Catalyzes the reduction of the antitumor anthracyclines doxorubicin and daunorubicin to the cardiotoxic compounds doxorubicinol and daunorubicinol. Can convert prostaglandin E to prostaglandin F2-alpha. Can bind glutathione, which explains its higher affinity for glutathione-conjugated substrates. Catalyzes the reduction of S-nitrosoglutathione. In addition, participates in the glucocorticoid metabolism by catalyzing the NADPH-dependent cortisol/corticosterone into 20beta-dihydrocortisol (20b-DHF) or 20beta-corticosterone (20b-DHB), which are weak agonists of NR3C1 and NR3C2 in adipose tissue. The protein is Carbonyl reductase [NADPH] 1 of Mus musculus (Mouse).